A 241-amino-acid polypeptide reads, in one-letter code: Ribosomal RNA small subunit methyltransferase J (241 aa).

Residues 94–95 and Asp-163 each bind S-adenosyl-L-methionine; that span reads RD.

It belongs to the methyltransferase superfamily. RsmJ family.

The protein localises to the cytoplasm. It catalyses the reaction guanosine(1516) in 16S rRNA + S-adenosyl-L-methionine = N(2)-methylguanosine(1516) in 16S rRNA + S-adenosyl-L-homocysteine + H(+). Its function is as follows. Specifically methylates the guanosine in position 1516 of 16S rRNA. The polypeptide is Ribosomal RNA small subunit methyltransferase J (Francisella tularensis subsp. tularensis (strain FSC 198)).